Reading from the N-terminus, the 78-residue chain is Translational regulator CsrA (78 aa).

It belongs to the CsrA/RsmA family. In terms of assembly, homodimer; the beta-strands of each monomer intercalate to form a hydrophobic core, while the alpha-helices form wings that extend away from the core.

It localises to the cytoplasm. Functionally, a translational regulator that binds mRNA to regulate translation initiation and/or mRNA stability. Usually binds in the 5'-UTR at or near the Shine-Dalgarno sequence preventing ribosome-binding, thus repressing translation. Its main target seems to be the major flagellin gene, while its function is anatagonized by FliW. In Natranaerobius thermophilus (strain ATCC BAA-1301 / DSM 18059 / JW/NM-WN-LF), this protein is Translational regulator CsrA.